A 399-amino-acid chain; its full sequence is MTNSLFETAKPILEKLQAHHFQAYFVGGSVRDYLMNRPIHDIDITTSATPDEIETVFDKTIPIGREHGTINVIYKGEQYEVTTFRSEGDYDDHRRPNEVFFVRNLYDDVQRRDFTMNAIAMDINYQIFDYFEGQQDIKHQLIRTVGNPDERFDEDALRIIRGLRFQSQFGFHLEEATFTAMLNHIADIKYLAIERIVVELKKLTNGDFVSKSFNNLKHFMAFKYIPFFKHYDITKFTLRNAMPFTTFVAFLISQQREIDANIADLKVSNNEKKRIKTLVQLIDQIDEVQTKSQLKLFVYDYGKKDILEVLSYLDELKRNRITSISPLIVNDQTVTEVAKQLPMLSRSEMDINGKDILEIANKKSGPWLKETLREVEYAIISGEVVNFKPELKKWVKTRV.

2 residues coordinate ATP: glycine 28 and arginine 31. CTP contacts are provided by glycine 28 and arginine 31. Positions 41 and 43 each coordinate Mg(2+). Residues arginine 112, aspartate 155, arginine 158, arginine 161, and arginine 164 each contribute to the ATP site. Positions 112, 155, 158, 161, and 164 each coordinate CTP.

Belongs to the tRNA nucleotidyltransferase/poly(A) polymerase family. Bacterial CCA-adding enzyme type 3 subfamily. In terms of assembly, homodimer. It depends on Mg(2+) as a cofactor.

The catalysed reaction is a tRNA precursor + 2 CTP + ATP = a tRNA with a 3' CCA end + 3 diphosphate. It carries out the reaction a tRNA with a 3' CCA end + 2 CTP + ATP = a tRNA with a 3' CCACCA end + 3 diphosphate. Catalyzes the addition and repair of the essential 3'-terminal CCA sequence in tRNAs without using a nucleic acid template. Adds these three nucleotides in the order of C, C, and A to the tRNA nucleotide-73, using CTP and ATP as substrates and producing inorganic pyrophosphate. tRNA 3'-terminal CCA addition is required both for tRNA processing and repair. Also involved in tRNA surveillance by mediating tandem CCA addition to generate a CCACCA at the 3' terminus of unstable tRNAs. While stable tRNAs receive only 3'-terminal CCA, unstable tRNAs are marked with CCACCA and rapidly degraded. The polypeptide is CCA-adding enzyme (Staphylococcus saprophyticus subsp. saprophyticus (strain ATCC 15305 / DSM 20229 / NCIMB 8711 / NCTC 7292 / S-41)).